Reading from the N-terminus, the 211-residue chain is tRNA (guanosine(18)-2'-O)-methyltransferase (211 aa).

S-adenosyl-L-methionine-binding residues include threonine 103, isoleucine 146, and leucine 155.

This sequence belongs to the class IV-like SAM-binding methyltransferase superfamily. RNA methyltransferase TrmH family. Homodimer.

It carries out the reaction guanosine(18) in tRNA + S-adenosyl-L-methionine = 2'-O-methylguanosine(18) in tRNA + S-adenosyl-L-homocysteine + H(+). In terms of biological role, catalyzes the 2'-O methylation of guanosine at position 18 in tRNA. Type II methylase, which methylates only a subset of tRNA species. The polypeptide is tRNA (guanosine(18)-2'-O)-methyltransferase (Aquifex aeolicus (strain VF5)).